Here is a 202-residue protein sequence, read N- to C-terminus: ATP-dependent Clp protease proteolytic subunit (202 aa).

The active-site Nucleophile is Ser-106. His-131 is a catalytic residue.

The protein belongs to the peptidase S14 family. As to quaternary structure, fourteen ClpP subunits assemble into 2 heptameric rings which stack back to back to give a disk-like structure with a central cavity, resembling the structure of eukaryotic proteasomes.

The protein localises to the cytoplasm. The catalysed reaction is Hydrolysis of proteins to small peptides in the presence of ATP and magnesium. alpha-casein is the usual test substrate. In the absence of ATP, only oligopeptides shorter than five residues are hydrolyzed (such as succinyl-Leu-Tyr-|-NHMec, and Leu-Tyr-Leu-|-Tyr-Trp, in which cleavage of the -Tyr-|-Leu- and -Tyr-|-Trp bonds also occurs).. Its function is as follows. Cleaves peptides in various proteins in a process that requires ATP hydrolysis. Has a chymotrypsin-like activity. Plays a major role in the degradation of misfolded proteins. This Paracidovorax citrulli (strain AAC00-1) (Acidovorax citrulli) protein is ATP-dependent Clp protease proteolytic subunit.